The primary structure comprises 793 residues: Phosphoribosylformylglycinamidine synthase subunit PurL (793 aa).

H53 is a catalytic residue. ATP-binding residues include Y56 and K95. E97 contributes to the Mg(2+) binding site. Substrate contacts are provided by residues S98–H101 and R120. The active-site Proton acceptor is the H99. Residue D121 participates in Mg(2+) binding. Q244 is a binding site for substrate. D272 provides a ligand contact to Mg(2+). E316–Q318 serves as a coordination point for substrate. ATP is bound by residues D523 and G560. Position 561 (N561) interacts with Mg(2+). S563 is a binding site for substrate.

Belongs to the FGAMS family. As to quaternary structure, monomer. Part of the FGAM synthase complex composed of 1 PurL, 1 PurQ and 2 PurS subunits.

It localises to the cytoplasm. The enzyme catalyses N(2)-formyl-N(1)-(5-phospho-beta-D-ribosyl)glycinamide + L-glutamine + ATP + H2O = 2-formamido-N(1)-(5-O-phospho-beta-D-ribosyl)acetamidine + L-glutamate + ADP + phosphate + H(+). Its pathway is purine metabolism; IMP biosynthesis via de novo pathway; 5-amino-1-(5-phospho-D-ribosyl)imidazole from N(2)-formyl-N(1)-(5-phospho-D-ribosyl)glycinamide: step 1/2. Functionally, part of the phosphoribosylformylglycinamidine synthase complex involved in the purines biosynthetic pathway. Catalyzes the ATP-dependent conversion of formylglycinamide ribonucleotide (FGAR) and glutamine to yield formylglycinamidine ribonucleotide (FGAM) and glutamate. The FGAM synthase complex is composed of three subunits. PurQ produces an ammonia molecule by converting glutamine to glutamate. PurL transfers the ammonia molecule to FGAR to form FGAM in an ATP-dependent manner. PurS interacts with PurQ and PurL and is thought to assist in the transfer of the ammonia molecule from PurQ to PurL. The chain is Phosphoribosylformylglycinamidine synthase subunit PurL from Prochlorococcus marinus (strain SARG / CCMP1375 / SS120).